We begin with the raw amino-acid sequence, 1437 residues long: Protein CC2D2B (1437 aa).

In Homo sapiens (Human), this protein is Protein CC2D2B.